The chain runs to 484 residues: Zinc metalloproteinase/disintegrin PMMP-2 (484 aa).

A signal peptide spans 1 to 20 (MIQVLLVTICLAVFPYQGSS). A propeptide spanning residues 21 to 190 (IILESGNVDD…KASQLNLTPL (170 aa)) is cleaved from the precursor. A Peptidase M12B domain is found at 197-395 (RYVKLAIVVD…YNPQCILNAP (199 aa)). N239 carries N-linked (GlcNAc...) asparagine glycosylation. 3 disulfides stabilise this stretch: C308–C390, C352–C374, and C354–C357. H333 is a Zn(2+) binding site. E334 is a catalytic residue. Positions 337 and 343 each coordinate Zn(2+). The propeptide occupies 396–413 (LRTDTVSTPVSGNEFLEA). The 82-residue stretch at 403–484 (TPVSGNEFLE…ADCPRNGLYG (82 aa)) folds into the Disintegrin domain. Cystine bridges form between C417–C432, C419–C427, C426–C449, C440–C446, C445–C470, and C458–C477. Residues 462–464 (RGD) carry the Cell attachment site motif.

The protein belongs to the venom metalloproteinase (M12B) family. P-II subfamily. P-IIa sub-subfamily. In terms of assembly, monomer. Requires Zn(2+) as cofactor. In terms of tissue distribution, expressed by the venom gland.

The protein resides in the secreted. In terms of biological role, impairs hemostasis in the envenomed animal. Inhibits platelet aggregation induced by ADP, thrombin, platelet-activating factor and collagen. Acts by inhibiting fibrinogen interaction with platelet receptors GPIIb/GPIIIa (ITGA2B/ITGB3). This is Zinc metalloproteinase/disintegrin PMMP-2 from Protobothrops mucrosquamatus (Taiwan habu).